The primary structure comprises 130 residues: Small ribosomal subunit protein uS11 (130 aa).

Belongs to the universal ribosomal protein uS11 family. Part of the 30S ribosomal subunit. Interacts with proteins S7 and S18. Binds to IF-3.

Its function is as follows. Located on the platform of the 30S subunit, it bridges several disparate RNA helices of the 16S rRNA. Forms part of the Shine-Dalgarno cleft in the 70S ribosome. The polypeptide is Small ribosomal subunit protein uS11 (Tropheryma whipplei (strain TW08/27) (Whipple's bacillus)).